The primary structure comprises 489 residues: L-asparagine permease 1 (489 aa).

12 helical membrane-spanning segments follow: residues 25 to 45 (QLQM…GASG), 49 to 69 (KAGP…FLIL), 100 to 120 (AVGW…TTAI), 137 to 157 (ILAL…VEWF), 162 to 182 (FWAA…GTVF), 210 to 230 (WLPL…VELV), 255 to 275 (IAIF…YTAY), 289 to 309 (IGFH…ALSS), 344 to 364 (YGGI…NAFK), 369 to 389 (FEIV…TIVL), 413 to 433 (SPYS…TMAS), and 439 to 459 (TWTV…WYLV).

This sequence belongs to the amino acid-polyamine-organocation (APC) superfamily. Amino acid transporter (AAT) (TC 2.A.3.1) family.

It is found in the cell membrane. This is L-asparagine permease 1 (ansP1) from Mycobacterium bovis (strain ATCC BAA-935 / AF2122/97).